Here is a 239-residue protein sequence, read N- to C-terminus: tRNA (guanine-N(7)-)-methyltransferase (239 aa).

The S-adenosyl-L-methionine site is built by E69, E94, D121, and D144. D144 is a catalytic residue. Residues K148, D180, and 217–220 (TKFE) each bind substrate.

It belongs to the class I-like SAM-binding methyltransferase superfamily. TrmB family. In terms of assembly, monomer.

The catalysed reaction is guanosine(46) in tRNA + S-adenosyl-L-methionine = N(7)-methylguanosine(46) in tRNA + S-adenosyl-L-homocysteine. It functions in the pathway tRNA modification; N(7)-methylguanine-tRNA biosynthesis. Catalyzes the formation of N(7)-methylguanine at position 46 (m7G46) in tRNA. This Buchnera aphidicola subsp. Acyrthosiphon pisum (strain Tuc7) protein is tRNA (guanine-N(7)-)-methyltransferase.